The primary structure comprises 331 residues: Thioredoxin-like fold domain-containing protein MRL7, chloroplastic (331 aa).

A chloroplast-targeting transit peptide spans 1–59 (MSFFAVACSAPRSSMLLTGLNSSFSDMHRSPLFVFPVTISSRSVKRFAAVSSDSVLDPE). 2 disordered regions span residues 52–105 (SDSV…ADAV) and 141–160 (GVDE…EDPD). Residues 142–160 (VDEEEEEEEEMVVEEEDPD) are compositionally biased toward acidic residues.

In terms of assembly, component of the transcriptionally active chromosome (TAC) complexes. Interacts with FSD2 and PRDA1. Interacts with FSD3 and CITRX/TRXZ. Binds to PTAC12/HMR/PAP5. Expressed in leaves, shoots, stems, cauline leaves, flower buds, flowers and siliques.

The protein localises to the plastid. Its subcellular location is the chloroplast. The protein resides in the chloroplast stroma. It is found in the chloroplast nucleoid. It localises to the nucleus. In terms of biological role, plays an essential role in early steps of chloroplast development. Involved in the regulation of plastid gene expression. May positively regulate plastid-encoded RNA polymerase (PEP) activity through binding to FSD3 and CITRX/TRXZ. Involved in redox-mediated regulation of chloroplast development. Possesses disulfide reductase activity in vitro. Required for the proper function of the plastid transcriptional machinery and protein accumulation in thylakoid membranes. May function as molecular chaperone to ensure proper organization of the nucleoids in chloroplasts. May mediate some aspect of thylakoid structure or function that controls non-photochemical quenching (NPQ). Participates in the early light signaling events of photobody biogenesis in chloroplasts. May mediate the degradation of two repressors of chloroplast biogenesis, PIF1 and PIF3 in nucleus. Collaboratively with PTAC12/HMR/PAP5, involved in the regulation of thermoresponsive responses via the stabilization of PIF4 in the daytime to initiate thermomorphogenesis. This Arabidopsis thaliana (Mouse-ear cress) protein is Thioredoxin-like fold domain-containing protein MRL7, chloroplastic.